Reading from the N-terminus, the 99-residue chain is Putative pterin-4-alpha-carbinolamine dehydratase (99 aa).

The protein belongs to the pterin-4-alpha-carbinolamine dehydratase family.

The catalysed reaction is (4aS,6R)-4a-hydroxy-L-erythro-5,6,7,8-tetrahydrobiopterin = (6R)-L-erythro-6,7-dihydrobiopterin + H2O. This Aquifex aeolicus (strain VF5) protein is Putative pterin-4-alpha-carbinolamine dehydratase.